The chain runs to 914 residues: Serine/threonine kinase SAD-1 (914 aa).

A Protein kinase domain is found at 47–298 (YKLEKTLGKG…LADVFKHPWV (252 aa)). ATP is bound by residues 53-61 (LGKGQTGLV) and Lys76. The active-site Proton acceptor is Asp169. Disordered regions lie at residues 375–551 (AQED…SPPS), 563–590 (TMNS…SGPW), and 757–914 (NSTQ…ADKV). A compositionally biased stretch (basic and acidic residues) spans 393-402 (PPKKRTDSSR). Low complexity predominate over residues 444–462 (RSSTRDLFGSSSSGSYSAR). Over residues 473-482 (ASRSTNSYHY) the composition is skewed to polar residues. Positions 495-526 (AARHVRDAQERRESRDSGRGSSRKESKDRSDK) are enriched in basic and acidic residues. Low complexity-rich tracts occupy residues 527–551 (SASS…SPPS) and 563–573 (TMNSTNSSTNS). Residues 574–590 (LIAGNSQTSIGSTSGPW) show a composition bias toward polar residues. The span at 780–796 (DSSVGSACSDSESNASS) shows a compositional bias: low complexity. A compositionally biased stretch (polar residues) spans 823–837 (SMRSVGSGTANSYKS). Over residues 850-876 (ASSSSASNRYGPSSSSSGSYSNNADYS) the composition is skewed to low complexity. Positions 882–903 (SQRSNGSSAPKNQYSPGSQRSF) are enriched in polar residues.

It belongs to the protein kinase superfamily. CAMK Ser/Thr protein kinase family. SNF1 subfamily. As to quaternary structure, interacts with strd-1 and nab-1. Mg(2+) serves as cofactor. As to expression, expressed in neurons. Colocalizes with strd-1 along the dorsal nerve cord.

It is found in the synapse. It carries out the reaction L-seryl-[protein] + ATP = O-phospho-L-seryl-[protein] + ADP + H(+). The enzyme catalyses L-threonyl-[protein] + ATP = O-phospho-L-threonyl-[protein] + ADP + H(+). Its function is as follows. Regulates both neuronal polarity and synaptic organization when bound to strd-1. Kinase activity is required for the establishment, but not the maintenance, of both processes. Binding to nab-1 is essential for role in restricting axonal fate during neuronal polarization but is not required for regulating synapse morphology. In Caenorhabditis elegans, this protein is Serine/threonine kinase SAD-1.